The following is a 256-amino-acid chain: Probable aquaporin TIP-type alpha (256 aa).

Residues methionine 1 to leucine 24 are Cytoplasmic-facing. The residue at position 7 (serine 7) is a Phosphoserine; by CPK. The chain crosses the membrane as a helical span at residues alanine 25–leucine 44. Over valine 45 to glutamate 57 the chain is Vacuolar. Residues leucine 58–methionine 77 form a helical membrane-spanning segment. The Cytoplasmic segment spans residues histidine 78 to arginine 102. Residues asparagine 85–alanine 87 carry the NPA 1 motif. The chain crosses the membrane as a helical span at residues alanine 103–leucine 121. The Vacuolar segment spans residues arginine 122–histidine 143. Residues methionine 144–isoleucine 164 traverse the membrane as a helical segment. Residues aspartate 165 to glycine 169 are Cytoplasmic-facing. Residues alanine 170 to valine 189 traverse the membrane as a helical segment. The Vacuolar portion of the chain corresponds to glycine 190–histidine 216. An NPA 2 motif is present at residues asparagine 199–alanine 201. The helical transmembrane segment at tryptophan 217–isoleucine 239 threads the bilayer. The Cytoplasmic portion of the chain corresponds to proline 240 to tyrosine 256.

It belongs to the MIP/aquaporin (TC 1.A.8) family. TIP (TC 1.A.8.10) subfamily. Post-translationally, phosphorylated by a tonoplast-bound calcium-dependent protein kinase. Found in all seed tissues that are alive at seed maturity, but not in tissues that lose viability during seed maturation.

The protein localises to the vacuole membrane. Functionally, channel protein in tonoplast. These proteins may allow the diffusion of amino acids and/or peptides from the vacuolar compartment to the cytoplasm. In Phaseolus vulgaris (Kidney bean), this protein is Probable aquaporin TIP-type alpha.